We begin with the raw amino-acid sequence, 345 residues long: uncharacterized protein (345 aa).

A disordered region spans residues Met-1–Glu-98. 3 stretches are compositionally biased toward basic and acidic residues: residues Arg-18–Thr-27, Ser-42–Pro-68, and Pro-76–His-86.

It belongs to the class IV-like SAM-binding methyltransferase superfamily. RNA methyltransferase TrmH family.

This is an uncharacterized protein from Escherichia coli O157:H7.